We begin with the raw amino-acid sequence, 383 residues long: Dimethylsulfoniopropionate lyase 6 (383 aa).

The protein belongs to the aspartate/glutamate racemases family. ALMA1 subfamily. In terms of assembly, homotetramer.

The enzyme catalyses S,S-dimethyl-beta-propiothetin = acrylate + dimethyl sulfide + H(+). In terms of biological role, mediates cleavage of dimethylsulfoniopropionate (DMSP) into dimethyl sulfide (DMS) and acrylate. DMS is the principal form by which sulfur is transported from oceans to the atmosphere and is a key component of the ocean sulfur cycle. The polypeptide is Dimethylsulfoniopropionate lyase 6 (Emiliania huxleyi (strain CCMP1516)).